The primary structure comprises 689 residues: Glycine--tRNA ligase beta subunit (689 aa).

The protein belongs to the class-II aminoacyl-tRNA synthetase family. Tetramer of two alpha and two beta subunits.

It is found in the cytoplasm. It catalyses the reaction tRNA(Gly) + glycine + ATP = glycyl-tRNA(Gly) + AMP + diphosphate. The protein is Glycine--tRNA ligase beta subunit of Klebsiella pneumoniae (strain 342).